The following is a 247-amino-acid chain: Protein ATC1/LIC4 (247 aa).

Disordered regions lie at residues 95–146 and 226–247; these read NSSA…DDQA and EKST…CPSS. Over residues 129 to 146 the composition is skewed to polar residues; it reads QNPSHRISNVQSNSDDQA.

It is found in the cytoplasm. The protein localises to the nucleus. Involved in cation homeostasis and in the regulation of the cation stress signaling cascades. The sequence is that of Protein ATC1/LIC4 (ATC1) from Debaryomyces hansenii (strain ATCC 36239 / CBS 767 / BCRC 21394 / JCM 1990 / NBRC 0083 / IGC 2968) (Yeast).